A 300-amino-acid polypeptide reads, in one-letter code: Erythroblast NAD(P)(+)--arginine ADP-ribosyltransferase (300 aa).

Residues 1-22 form the signal peptide; it reads MEEPLLHAILGLVLLLSTRTDA. 2 disulfides stabilise this stretch: Cys51–Cys260 and Cys159–Cys208. The TR mART core domain occupies 70–256; the sequence is ETFAEGWRSA…IQLRSQGKSS (187 aa). NAD(+)-binding residues include Tyr107, Arg164, and Gln183. Arg164 is a catalytic residue. Ser186 is a catalytic residue. NAD(+) is bound at residue Ser217. Glu224 is an active-site residue. The tract at residues 276–300 is disordered; sequence SADKSSPLPRSPWPGWAPLAAPHSH.

This sequence belongs to the Arg-specific ADP-ribosyltransferase family.

It carries out the reaction L-arginyl-[protein] + NAD(+) = N(omega)-(ADP-D-ribosyl)-L-arginyl-[protein] + nicotinamide + H(+). In Gallus gallus (Chicken), this protein is Erythroblast NAD(P)(+)--arginine ADP-ribosyltransferase (MADPRT).